A 696-amino-acid chain; its full sequence is UvrABC system protein B (696 aa).

The Helicase ATP-binding domain maps to 46 to 433 (EGVEDGLSFQ…SGQTAEQVVR (388 aa)). Residue 59 to 66 (GVTGSGKT) coordinates ATP. Positions 112-135 (YYDYYQPEAYVPQRDLFIEKDSSI) match the Beta-hairpin motif. Residues 450 to 616 (QVDDVLSEIT…GVVKRIKDII (167 aa)) form the Helicase C-terminal domain. Residues 647–682 (AKEIKRLEKQMADYAKNLEFEKAAQTRDQLALLRER) form the UVR domain.

This sequence belongs to the UvrB family. As to quaternary structure, forms a heterotetramer with UvrA during the search for lesions. Interacts with UvrC in an incision complex.

Its subcellular location is the cytoplasm. In terms of biological role, the UvrABC repair system catalyzes the recognition and processing of DNA lesions. A damage recognition complex composed of 2 UvrA and 2 UvrB subunits scans DNA for abnormalities. Upon binding of the UvrA(2)B(2) complex to a putative damaged site, the DNA wraps around one UvrB monomer. DNA wrap is dependent on ATP binding by UvrB and probably causes local melting of the DNA helix, facilitating insertion of UvrB beta-hairpin between the DNA strands. Then UvrB probes one DNA strand for the presence of a lesion. If a lesion is found the UvrA subunits dissociate and the UvrB-DNA preincision complex is formed. This complex is subsequently bound by UvrC and the second UvrB is released. If no lesion is found, the DNA wraps around the other UvrB subunit that will check the other stand for damage. This Burkholderia mallei (strain ATCC 23344) protein is UvrABC system protein B.